The chain runs to 533 residues: Probable protein kinase UbiB (533 aa).

The helical transmembrane segment at 24 to 44 threads the bilayer; that stretch reads LILELPMLPWWLRLLGATLPW. In terms of domain architecture, Protein kinase spans 126–494; sequence RFEREPLASA…WKGSRHDWLG (369 aa). Residues 132 to 140 and K154 each bind ATP; that span reads LASASVAQV. D289 (proton acceptor) is an active-site residue. A helical membrane pass occupies residues 510–530; sequence LGQQLEAWPAWVMLAGGVFLI.

Belongs to the ABC1 family. UbiB subfamily.

The protein localises to the cell inner membrane. It functions in the pathway cofactor biosynthesis; ubiquinone biosynthesis [regulation]. In terms of biological role, is probably a protein kinase regulator of UbiI activity which is involved in aerobic coenzyme Q (ubiquinone) biosynthesis. The polypeptide is Probable protein kinase UbiB (Pseudomonas aeruginosa (strain ATCC 15692 / DSM 22644 / CIP 104116 / JCM 14847 / LMG 12228 / 1C / PRS 101 / PAO1)).